The chain runs to 129 residues: Ribosome-binding factor A (129 aa).

Belongs to the RbfA family. As to quaternary structure, monomer. Binds 30S ribosomal subunits, but not 50S ribosomal subunits or 70S ribosomes.

It localises to the cytoplasm. Its function is as follows. One of several proteins that assist in the late maturation steps of the functional core of the 30S ribosomal subunit. Associates with free 30S ribosomal subunits (but not with 30S subunits that are part of 70S ribosomes or polysomes). Required for efficient processing of 16S rRNA. May interact with the 5'-terminal helix region of 16S rRNA. This is Ribosome-binding factor A from Gloeobacter violaceus (strain ATCC 29082 / PCC 7421).